A 169-amino-acid polypeptide reads, in one-letter code: Peptide deformylase (169 aa).

Residues Cys91 and His133 each contribute to the Fe cation site. Glu134 is a catalytic residue. His137 serves as a coordination point for Fe cation.

The protein belongs to the polypeptide deformylase family. The cofactor is Fe(2+).

It carries out the reaction N-terminal N-formyl-L-methionyl-[peptide] + H2O = N-terminal L-methionyl-[peptide] + formate. Removes the formyl group from the N-terminal Met of newly synthesized proteins. Requires at least a dipeptide for an efficient rate of reaction. N-terminal L-methionine is a prerequisite for activity but the enzyme has broad specificity at other positions. This is Peptide deformylase from Hydrogenovibrio crunogenus (strain DSM 25203 / XCL-2) (Thiomicrospira crunogena).